We begin with the raw amino-acid sequence, 293 residues long: Ethanolamine ammonia-lyase small subunit (293 aa).

Adenosylcob(III)alamin is bound by residues V207 and E228.

This sequence belongs to the EutC family. As to quaternary structure, the basic unit is a heterodimer which dimerizes to form tetramers. The heterotetramers trimerize; 6 large subunits form a core ring with 6 small subunits projecting outwards. It depends on adenosylcob(III)alamin as a cofactor.

The protein resides in the bacterial microcompartment. It catalyses the reaction ethanolamine = acetaldehyde + NH4(+). The protein operates within amine and polyamine degradation; ethanolamine degradation. Functionally, catalyzes the deamination of various vicinal amino-alcohols to oxo compounds. Allows this organism to utilize ethanolamine as the sole source of nitrogen and carbon in the presence of external vitamin B12. This chain is Ethanolamine ammonia-lyase small subunit, found in Listeria monocytogenes serovar 1/2a (strain ATCC BAA-679 / EGD-e).